A 317-amino-acid chain; its full sequence is MVVSGAPPALGGGCLGTFTSLLLLASTAILNAARIPVPPACGKPQQLNRVVGGEDSTDSEWPWIVSIQKNGTHHCAGSLLTSRWVITAAHCFKDNLNKPYLFSVLLGAWQLGNPGSRSQKVGVAWVEPHPVYSWKEGACADIALVRLERSIQFSERVLPICLPDASIHLPPNTHCWISGWGSIQDGVPLPHPQTLQKLKVPIIDSEVCSHLYWRGAGQGPITEDMLCAGYLEGERDACLGDSGGPLMCQVDGAWLLAGIISWGEGCAERNRPGVYISLSAHRSWVEKIVQGVQLRGRAQGGGALRAPSQGSGAAARS.

Residues 1-32 (MVVSGAPPALGGGCLGTFTSLLLLASTAILNA) form the signal peptide. The Peptidase S1 domain occupies 50–290 (VVGGEDSTDS…HRSWVEKIVQ (241 aa)). N-linked (GlcNAc...) asparagine glycosylation occurs at N70. C75 and C91 form a disulfide bridge. Residues H90 and D141 each act as charge relay system in the active site. Cystine bridges form between C175-C248, C208-C227, and C238-C266. The active-site Charge relay system is S242.

Belongs to the peptidase S1 family. As to expression, expressed abundantly in the epithelial cells of the airways, including trachea, esophagus and fetal lung. Scarce in adult lung. Expressed at low levels in placenta, pancreas, prostate and thyroid gland.

It is found in the secreted. Its function is as follows. Preferentially cleaves the synthetic substrate H-D-Leu-Thr-Arg-pNA compared to tosyl-Gly-Pro-Arg-pNA. The sequence is that of Brain-specific serine protease 4 (PRSS22) from Homo sapiens (Human).